The primary structure comprises 246 residues: Peroxisomal membrane protein 11A (246 aa).

The Cytoplasmic portion of the chain corresponds to 1–93; that stretch reads MDAFIRVANQ…LCLTLANLNR (93 aa). Residues 94–114 form a helical membrane-spanning segment; sequence VVYYICDTVLWAKSVGLTSGV. Residues 115 to 217 lie on the Lumenal side of the membrane; the sequence is NREKWQRWAA…LNQLGIYKSN (103 aa). A helical transmembrane segment spans residues 218-238; the sequence is LGVVGLGGLISSLAGLLTVVY. The required for homodimerization, interaction with PEX11G, and peroxisomal localization stretch occupies residues 218 to 238; sequence LGVVGLGGLISSLAGLLTVVY. The Cytoplasmic segment spans residues 239–246; sequence PQLKLKAR.

Belongs to the peroxin-11 family. In terms of assembly, homodimer. Heterodimer with PEX11G. Probably interacts with COPB2 and COPA. Interacts with PEX19. Interacts with FIS1. As to expression, strongly expressed in liver and at lower levels in heart, brain, kidney and testis.

The protein localises to the peroxisome membrane. Functionally, may be involved in peroxisomal proliferation and may regulate peroxisomes division. May mediate binding of coatomer proteins to the peroxisomal membrane. Promotes membrane protrusion and elongation on the peroxisomal surface. In Mus musculus (Mouse), this protein is Peroxisomal membrane protein 11A (Pex11a).